We begin with the raw amino-acid sequence, 202 residues long: uncharacterized protein (202 aa).

Residues 18-38 (FLIFLIFLSVLGCGITISGCI) traverse the membrane as a helical segment.

It localises to the membrane. This is an uncharacterized protein from Methanocaldococcus jannaschii (strain ATCC 43067 / DSM 2661 / JAL-1 / JCM 10045 / NBRC 100440) (Methanococcus jannaschii).